We begin with the raw amino-acid sequence, 350 residues long: Dihydroorotate dehydrogenase (quinone) (350 aa).

FMN contacts are provided by residues 67–71 (AGFDK) and Gly91. Lys71 is a binding site for substrate. 116–120 (NRMGL) contributes to the substrate binding site. Residues Asn144 and Asn177 each contribute to the FMN site. Asn177 provides a ligand contact to substrate. Cys180 (nucleophile) is an active-site residue. Residue Asn182 participates in substrate binding. Residues Lys213 and Thr241 each contribute to the FMN site. A substrate-binding site is contributed by 242-243 (NT). Positions 245-265 (TERPASLRSPNAVETGGLSGK) are disordered. FMN is bound by residues Gly264, Gly291, and 312–313 (YT).

This sequence belongs to the dihydroorotate dehydrogenase family. Type 2 subfamily. As to quaternary structure, monomer. The cofactor is FMN.

Its subcellular location is the cell membrane. The catalysed reaction is (S)-dihydroorotate + a quinone = orotate + a quinol. Its pathway is pyrimidine metabolism; UMP biosynthesis via de novo pathway; orotate from (S)-dihydroorotate (quinone route): step 1/1. In terms of biological role, catalyzes the conversion of dihydroorotate to orotate with quinone as electron acceptor. This chain is Dihydroorotate dehydrogenase (quinone) (pyrD), found in Haloarcula marismortui (strain ATCC 43049 / DSM 3752 / JCM 8966 / VKM B-1809) (Halobacterium marismortui).